A 1326-amino-acid polypeptide reads, in one-letter code: MERGCPAASSESVTSAGERTQSAVTSSTSTWVKSQASTSRKTEASEESGLGAVDAEVGAGREAFVSMSTLREDVEDVCVSSNSQHGFAVVLDDESSTFEISSSNSLPTSAGAASTVGVVAVDDSSSTDTLNGGHPDLGHPASSEHSRQGFFNEDNEDPPVVCLINDDDDDEEPEPEEDDEEELIEDEDEDAVDIVTGAISCPNTSQLALADGTIMAADGSKIFLETPVVEEAQPHPGQVVTTGSQSELTGKPKRLSDEFLLGEEDQAENLALGRCIKSEPVNPVDDNPSEGDDGATCFSLHDRLMSVRLKQMSLTANTVSNPSPAASANAAAPEEASTSNSSSTSSSALSRADIESMDLIERRDFETEQRLTGGIILRTSSMVSQNKLNLSLIKSMAGGSKAANGSGTANSDDWPSSSNGRTVSSDSKYTYKDLSTTPTSSRKYTNSRLSKSTAKLNLGSSLGASSCSQHRSGSSSTSKSMESSTSCTGAARTDVYTNTNSNDYPSLAPTTSGSSTSGGSCQQDQEENVSASVSYSSVGSQTSQESGCSRTTAINPTAACSTGSACLGDSQASTSASTSSGAGASNRCQYATTSTTKAARQVNASAQTQERFLTRSNPPAASGAGSVGANPTASVRQRRNGSSDVVHLEVVVEEGAGGGDGGVVEPGDFSAEEPWANCDEENNCSDLEEICTCQNGNGSSYGGSNASLSETFDMDAMDPDEPISLSLSSASAGFTEYSLTNPSSLMSHQRKRKFNEGRLLDGGDYSVTISSSGEVGGPGSGVSDNCRKRIAYDFASTPRSSQHLGPTAVLSVTPSSHLTSSTPGSALGRRTPRSVPSRDNPPPELQHWLAQFQRWSHVERLLALDRLIDHCDPSQVRHMMKVIEPQFQRDFISLLPRELALFVLSYLEPKDLLRAAQTCRSWRFLCDDNLLWKEKCRKAQILAEPRSDRPKRGRDGNMPPIASPWKAAYMRQHIIEMNWRSRPVRKPKVLKGHDDHVITCLQFSGNRIVSGSDDNTLKVWSAVNGKCLRTLVGHTGGVWSSQMSGNIIISGSTDRTLKVWDMDSGACVHTLQGHTSTVRCMHLHGSKVVSGSRDATLRVWDIEQGSCLHVLVGHLAAVRCVQYDGKLIVSGAYDYMVKIWHPERQECLHTLQGHTNRVYSLQFDGLHVVSGSLDTSIRVWDVETGNCKHTLMGHQSLTSGMELRQNILVSGNADSTVKVWDITTGQCLQTLSGPNKHHSAVTCLQFNSRFVVTSSDDGTVKLWDVKTGDFIRNLVALDSGGSGGVVWRIRANDTKLICAVGSRNGTEETKLMVLDFDVEGACVKCS.

6 disordered regions span residues methionine 1–glycine 58, aspartate 123–glutamate 187, threonine 318–arginine 351, glycine 399–serine 549, arginine 615–serine 642, and threonine 797–proline 843. Polar residues predominate over residues serine 9–serine 39. The segment covering asparagine 165–glutamate 187 has biased composition (acidic residues). Positions serine 320–alanine 348 are enriched in low complexity. Over residues alanine 403–alanine 464 the composition is skewed to polar residues. Residues serine 465 to serine 486 are compositionally biased toward low complexity. The segment covering valine 495–tyrosine 504 has biased composition (polar residues). Composition is skewed to low complexity over residues threonine 510 to serine 520, asparagine 528 to serine 546, and serine 616 to proline 631. 2 stretches are compositionally biased toward polar residues: residues threonine 632–serine 642 and threonine 797–glycine 824. Threonine 813 carries the post-translational modification Phosphothreonine. Serine 825 is subject to Phosphoserine. Positions arginine 889 to lysine 935 constitute an F-box domain. WD repeat units lie at residues glycine 992–threonine 1030, glycine 1033–threonine 1070, glycine 1073–valine 1110, glycine 1113–threonine 1150, glycine 1153–threonine 1190, glycine 1193–serine 1232, and lysine 1236–asparagine 1273.

As to quaternary structure, part of a SCF E3 ubiquitin-protein ligase complex. Interacts with Myc and puf. Interacts with CycE. As to expression, expressed in follicle cell epithelium and imaginal disks, particularly in the morphogenetic furrow.

It localises to the nucleus. Its pathway is protein modification; protein ubiquitination. Functionally, substrate recognition component of a SCF (SKP1-CUL1-F-box protein) E3 ubiquitin-protein ligase complex which mediates the ubiquitination and subsequent proteasomal degradation of target proteins. Probably recognizes and binds to phosphorylated target proteins. In the wing and eye, negatively regulates cell growth and proliferation by mediating the degradation of Myc and cyclin E, respectively. Required for endocycles, but not mitosis in follicle cell epithelium. The sequence is that of F-box/WD repeat-containing protein 7 from Drosophila melanogaster (Fruit fly).